Consider the following 557-residue polypeptide: Probable WRKY transcription factor 20 (557 aa).

A compositionally biased stretch (basic and acidic residues) spans 1–12 (MNPQANDRKEFQ). Disordered stretches follow at residues 1–36 (MNPQ…GGGA) and 76–215 (KPEP…DGYN). The span at 95-114 (SASSSSYTGRGFHQNTFTEQ) shows a compositional bias: polar residues. Residues 151–169 (SSHSPSSISDAAGSSSELS) show a composition bias toward low complexity. Residues 193–207 (SIQTSQNDSRGSTPS) show a composition bias toward polar residues. A DNA-binding region (WRKY 1) is located at residues 205–269 (TPSILADDGY…YKGTHDHPKP (65 aa)). 4 residues coordinate Zn(2+): C236, C241, H264, and H266. Positions 257 to 348 (DIIYKGTHDH…PDDDDPFSKR (92 aa)) are disordered. The span at 282 to 299 (QEERLDKYPSSTGRDEKG) shows a compositional bias: basic and acidic residues. Polar residues predominate over residues 303–314 (YNLSNPNEQTGN). Residues 321 to 332 (SASDDGGEAAAS) are compositionally biased toward low complexity. Residues 375–440 (SEVDILDDGY…YEGKHDHDVP (66 aa)) constitute a DNA-binding region (WRKY 2). Zn(2+)-binding residues include C406, C411, H435, and H437. Disordered stretches follow at residues 433 to 486 (GKHD…QHQN) and 520 to 557 (NQYG…QSGP). Polar residues predominate over residues 520 to 536 (NQYGQRETKNETQNGDI).

This sequence belongs to the WRKY group I family.

Its subcellular location is the nucleus. Its function is as follows. Transcription factor. Interacts specifically with the W box (5'-(T)TGAC[CT]-3'), a frequently occurring elicitor-responsive cis-acting element. This chain is Probable WRKY transcription factor 20 (WRKY20), found in Arabidopsis thaliana (Mouse-ear cress).